The primary structure comprises 391 residues: Dual-specificity RNA methyltransferase RlmN (391 aa).

Glutamate 115 acts as the Proton acceptor in catalysis. The region spanning 121–363 is the Radical SAM core domain; the sequence is EENRGTLCIS…SPIRTPRGED (243 aa). Residues cysteine 128 and cysteine 368 are joined by a disulfide bond. [4Fe-4S] cluster is bound by residues cysteine 135, cysteine 139, and cysteine 142. S-adenosyl-L-methionine-binding positions include 194 to 195, serine 226, 248 to 250, and asparagine 325; these read GE and SFH. Catalysis depends on cysteine 368, which acts as the S-methylcysteine intermediate.

The protein belongs to the radical SAM superfamily. RlmN family. It depends on [4Fe-4S] cluster as a cofactor.

The protein localises to the cytoplasm. The catalysed reaction is adenosine(2503) in 23S rRNA + 2 reduced [2Fe-2S]-[ferredoxin] + 2 S-adenosyl-L-methionine = 2-methyladenosine(2503) in 23S rRNA + 5'-deoxyadenosine + L-methionine + 2 oxidized [2Fe-2S]-[ferredoxin] + S-adenosyl-L-homocysteine. It carries out the reaction adenosine(37) in tRNA + 2 reduced [2Fe-2S]-[ferredoxin] + 2 S-adenosyl-L-methionine = 2-methyladenosine(37) in tRNA + 5'-deoxyadenosine + L-methionine + 2 oxidized [2Fe-2S]-[ferredoxin] + S-adenosyl-L-homocysteine. Functionally, specifically methylates position 2 of adenine 2503 in 23S rRNA and position 2 of adenine 37 in tRNAs. m2A2503 modification seems to play a crucial role in the proofreading step occurring at the peptidyl transferase center and thus would serve to optimize ribosomal fidelity. This Paracoccus denitrificans (strain Pd 1222) protein is Dual-specificity RNA methyltransferase RlmN.